The following is a 179-amino-acid chain: Large ribosomal subunit protein uL5c (179 aa).

This sequence belongs to the universal ribosomal protein uL5 family. As to quaternary structure, part of the 50S ribosomal subunit; contacts the 5S rRNA.

It localises to the plastid. The protein resides in the chloroplast. In terms of biological role, binds 5S rRNA, forms part of the central protuberance of the 50S subunit. This chain is Large ribosomal subunit protein uL5c (rpl5), found in Gracilaria tenuistipitata var. liui (Red alga).